Here is a 257-residue protein sequence, read N- to C-terminus: Protein UL133 (257 aa).

2 helical membrane passes run 14–34 (WGVP…IWCL) and 45–65 (PGIA…AYLI). The disordered stretch occupies residues 149–232 (PTVFVPPPSE…AMPQMPPGVA (84 aa)). The segment covering 164-175 (VIPPQPPTPTSE) has biased composition (pro residues). Residues 179-193 (KKGRAKDKPKGRPKN) show a composition bias toward basic residues. The span at 214–228 (GGPPDASPPAMPQMP) shows a compositional bias: pro residues.

It is found in the host Golgi apparatus membrane. The protein is Protein UL133 (UL133) of Human cytomegalovirus (strain Merlin) (HHV-5).